A 168-amino-acid polypeptide reads, in one-letter code: METGPRGCPSGRKESQEICSPGLLVFTGCSEQDANLAKQFWLGASMYPTTESQLVLTRGSSQRLPVARNSKVVLREKSSVQPFPFDQDKDAIIFAKAQRIQESEERAKYLQKAKTRDEILQLLRKQREERISKELISLPYKPKDKVPKSKEVLSESGLRDQEEVKALE.

Residues Pro142–Glu168 form a disordered region.

The protein belongs to the HOATZ family. Specifically expressed in tissues with motile cilia and flagella, such as brain ependyma, lung, testis, and oviduct but not in whole brain, liver,kidney, spleen, and eyeball.

Its subcellular location is the cytoplasm. The protein resides in the cell projection. It localises to the cilium. Functionally, required for motile ciliogenesis and flagellar genesis by mediating the maturation of the glycolytic enzyme ENO4. The sequence is that of Cilia- and flagella-associated protein HOATZ from Mus musculus (Mouse).